The primary structure comprises 130 residues: Con-Ins M1 (130 aa).

The signal sequence occupies residues 1–21 (MTTSSYFLLVALGLLLYVCQS). Intrachain disulfides connect Cys-29–Cys-107, Cys-41–Cys-110, Cys-53–Cys-123, and Cys-109–Cys-114. Pro-34 carries the post-translational modification 4-hydroxyproline; partial. Positions 59–92 (AHGGTNDARATTGRALSLSKRRGFLSMLKRRGKR) are cleaved as a propeptide — c peptide. The residue at position 118 (Glu-118) is a 4-carboxyglutamate; partial. Ser-129 bears the Serine amide mark.

The protein belongs to the insulin family. Heterodimer of A and B chains; disulfide-linked. Expressed by the venom gland.

The protein localises to the secreted. In terms of biological role, this venom insulin facilitates prey capture by rapidly inducing hypoglycemic shock. Intraperitoneal injection of this peptide into zebrafish lowers blood glucose with the same potency than human insulin. In vivo, when applied to water, this peptide reduces overall locomotor activity of zebrafish larvae, observed as a significant decrease in the percentage of time spent swimming and movement frequency. This is Con-Ins M1 from Conus marmoreus (Marble cone).